The following is a 166-amino-acid chain: Interferon gamma (166 aa).

The first 23 residues, 1 to 23 (MKYTSSFLALLLCVLLGFSGSYG), serve as a signal peptide directing secretion. Gln24 carries the post-translational modification Pyrrolidone carboxylic acid. N-linked (GlcNAc...) asparagine glycans are attached at residues Asn39 and Asn106.

Belongs to the type II (or gamma) interferon family. In terms of assembly, homodimer. Interacts with IFNGR1 (via extracellular domain); this interaction promotes IFNGR1 dimerization. As to expression, released primarily from activated T lymphocytes.

It is found in the secreted. In terms of biological role, type II interferon produced by immune cells such as T-cells and NK cells that plays crucial roles in antimicrobial, antiviral, and antitumor responses by activating effector immune cells and enhancing antigen presentation. Primarily signals through the JAK-STAT pathway after interaction with its receptor IFNGR1 to affect gene regulation. Upon IFNG binding, IFNGR1 intracellular domain opens out to allow association of downstream signaling components JAK2, JAK1 and STAT1, leading to STAT1 activation, nuclear translocation and transcription of IFNG-regulated genes. Many of the induced genes are transcription factors such as IRF1 that are able to further drive regulation of a next wave of transcription. Plays a role in class I antigen presentation pathway by inducing a replacement of catalytic proteasome subunits with immunoproteasome subunits. In turn, increases the quantity, quality, and repertoire of peptides for class I MHC loading. Increases the efficiency of peptide generation also by inducing the expression of activator PA28 that associates with the proteasome and alters its proteolytic cleavage preference. Up-regulates as well MHC II complexes on the cell surface by promoting expression of several key molecules such as cathepsins B/CTSB, H/CTSH, and L/CTSL. Participates in the regulation of hematopoietic stem cells during development and under homeostatic conditions by affecting their development, quiescence, and differentiation. The protein is Interferon gamma (IFNG) of Ovis aries (Sheep).